The primary structure comprises 513 residues: Histidine ammonia-lyase (513 aa).

The segment at residues 143–145 (ASG) is a cross-link (5-imidazolinone (Ala-Gly)). S144 carries the post-translational modification 2,3-didehydroalanine (Ser).

Belongs to the PAL/histidase family. Post-translationally, contains an active site 4-methylidene-imidazol-5-one (MIO), which is formed autocatalytically by cyclization and dehydration of residues Ala-Ser-Gly.

The protein localises to the cytoplasm. It carries out the reaction L-histidine = trans-urocanate + NH4(+). The protein operates within amino-acid degradation; L-histidine degradation into L-glutamate; N-formimidoyl-L-glutamate from L-histidine: step 1/3. The chain is Histidine ammonia-lyase from Paracoccus denitrificans (strain Pd 1222).